A 304-amino-acid chain; its full sequence is Probable 5-dehydro-4-deoxyglucarate dehydratase (304 aa).

It belongs to the DapA family.

The enzyme catalyses 5-dehydro-4-deoxy-D-glucarate + H(+) = 2,5-dioxopentanoate + CO2 + H2O. Its pathway is carbohydrate acid metabolism; D-glucarate degradation; 2,5-dioxopentanoate from D-glucarate: step 2/2. The protein is Probable 5-dehydro-4-deoxyglucarate dehydratase of Arthrobacter sp. (strain FB24).